A 454-amino-acid polypeptide reads, in one-letter code: Elongation factor Tu, mitochondrial (454 aa).

The N-terminal 51 residues, 1–51, are a transit peptide targeting the mitochondrion; the sequence is MASVVLRNPSSKRLVPFSSQIYSRCGASVTSSYSISHSIGGDDLSSSTFGT. Residues 65-261 form the tr-type G domain; that stretch reads KPHVNVGTIG…AVDEYIPDPV (197 aa). Positions 74–81 are G1; it reads GHVDHGKT. Position 74–81 (74–81) interacts with GTP; that stretch reads GHVDHGKT. Thr-82 bears the Phosphothreonine mark. The G2 stretch occupies residues 115–119; the sequence is GITIA. Residues 136-139 are G3; the sequence is DCPG. GTP-binding positions include 136 to 140 and 191 to 194; these read DCPGH and NKVD. The interval 191–194 is G4; it reads NKVD. Residues 229 to 231 form a G5 region; sequence SAL.

The protein belongs to the TRAFAC class translation factor GTPase superfamily. Classic translation factor GTPase family. EF-Tu/EF-1A subfamily.

The protein localises to the mitochondrion. Its function is as follows. This protein promotes the GTP-dependent binding of aminoacyl-tRNA to the A-site of ribosomes during protein biosynthesis. The sequence is that of Elongation factor Tu, mitochondrial (TUFA) from Arabidopsis thaliana (Mouse-ear cress).